We begin with the raw amino-acid sequence, 253 residues long: MALQPESPGQPASTVDPAEIAKFSKLSAEWWDPTGRMAPLHRINPLRISFIRDAACRKFERNAKSLSCLEGLRMLDIGCGAGLLCEPFTRLGAQVIGIDPSATNIAAAKLHADKSHLAIDYRNVMVEEIDPRERFDIVLAMEVIEHVTDVGAFLSRCAALMKPTGIMVVATLNRNWKSFALAIVGAEYVMRWLPRGTHQWDKFVTPAELEQHLNRLKLIVTEQSGLVFNPLADRWKLSPDMDVNYMMVAEAAP.

S-adenosyl-L-methionine contacts are provided by R47, G78, D99, and M141.

The protein belongs to the methyltransferase superfamily. UbiG/COQ3 family.

The enzyme catalyses a 3-demethylubiquinol + S-adenosyl-L-methionine = a ubiquinol + S-adenosyl-L-homocysteine + H(+). It carries out the reaction a 3-(all-trans-polyprenyl)benzene-1,2-diol + S-adenosyl-L-methionine = a 2-methoxy-6-(all-trans-polyprenyl)phenol + S-adenosyl-L-homocysteine + H(+). The protein operates within cofactor biosynthesis; ubiquinone biosynthesis. Its function is as follows. O-methyltransferase that catalyzes the 2 O-methylation steps in the ubiquinone biosynthetic pathway. The polypeptide is Ubiquinone biosynthesis O-methyltransferase (Rhodopseudomonas palustris (strain ATCC BAA-98 / CGA009)).